Here is a 357-residue protein sequence, read N- to C-terminus: Cobalt-precorrin-5B C(1)-methyltransferase (357 aa).

Belongs to the CbiD family.

It catalyses the reaction Co-precorrin-5B + S-adenosyl-L-methionine = Co-precorrin-6A + S-adenosyl-L-homocysteine. Its pathway is cofactor biosynthesis; adenosylcobalamin biosynthesis; cob(II)yrinate a,c-diamide from sirohydrochlorin (anaerobic route): step 6/10. In terms of biological role, catalyzes the methylation of C-1 in cobalt-precorrin-5B to form cobalt-precorrin-6A. In Paramagnetospirillum magneticum (strain ATCC 700264 / AMB-1) (Magnetospirillum magneticum), this protein is Cobalt-precorrin-5B C(1)-methyltransferase.